The following is a 785-amino-acid chain: (+)-copalyl diphosphate synthase 3, chloroplastic (785 aa).

Residue Lys238 coordinates substrate. Mg(2+) contacts are provided by Asp371 and Asp373. The short motif at 371–374 is the DXDD motif element; that stretch reads DIDD. Lys457 contacts substrate.

The protein belongs to the terpene synthase family. Requires Mg(2+) as cofactor. In terms of tissue distribution, present in both leaves and flowers, with higher levels in leaves.

Its subcellular location is the plastid. It is found in the chloroplast. It carries out the reaction (2E,6E,10E)-geranylgeranyl diphosphate = (+)-copalyl diphosphate. It participates in secondary metabolite biosynthesis; terpenoid biosynthesis. Its function is as follows. Involved in the biosynthesis of labdane-type diterpenoid including marrubiin and other labdane-related furanoid diterpenoids with potential applications as anti-diabetics, analgesics or vasorelaxants. Terpene synthase that produces (+)-copalyl diphosphate ((+)-CPP) from geranylgeranyl diphosphate (GGPP). The protein is (+)-copalyl diphosphate synthase 3, chloroplastic of Marrubium vulgare (White horehound).